Reading from the N-terminus, the 65-residue chain is DNA-directed RNA polymerase subunit Rpo10 (65 aa).

Zn(2+) contacts are provided by C7, C10, C44, and C45.

This sequence belongs to the archaeal Rpo10/eukaryotic RPB10 RNA polymerase subunit family. As to quaternary structure, part of the RNA polymerase complex. Zn(2+) is required as a cofactor.

The protein resides in the cytoplasm. Its subcellular location is the chromosome. The enzyme catalyses RNA(n) + a ribonucleoside 5'-triphosphate = RNA(n+1) + diphosphate. Its function is as follows. DNA-dependent RNA polymerase (RNAP) catalyzes the transcription of DNA into RNA using the four ribonucleoside triphosphates as substrates. This is DNA-directed RNA polymerase subunit Rpo10 from Thermococcus kodakarensis (strain ATCC BAA-918 / JCM 12380 / KOD1) (Pyrococcus kodakaraensis (strain KOD1)).